The chain runs to 523 residues: MEDRNAMDMSRIKYRPQPLRPASMVQPRVLLFPFPALGHVKPFLSLAELLSDAGIDVVFLSTEYNHRRISNTEALASRFPTLHFETIPDGLPPNESRALADGPLYFSMREGTKPRFRQLIQSLNDGRWPITCIITDIMLSSPIEVAEEFGIPVIAFCPCSARYLSIHFFIPKLVEEGQIPYADDDPIGEIQGVPLFEGLLRRNHLPGSWSDKSADISFSHGLINQTLAAGRASALILNTFDELEAPFLTHLSSIFNKIYTIGPLHALSKSRLGDSSSSASALSGFWKEDRACMSWLDCQPPRSVVFVSFGSTMKMKADELREFWYGLVSSGKPFLCVLRSDVVSGGEAAELIEQMAEEEGAGGKLGMVVEWAAQEKVLSHPAVGGFLTHCGWNSTVESIAAGVPMMCWPILGDQPSNATWIDRVWKIGVERNNREWDRLTVEKMVRALMEGQKRVEIQRSMEKLSKLANEKVVRGINLHPTISLKKDTPTTSEHPRHEFENMRGMNYEMLVGNAIKSPTLTKK.

The active-site Proton acceptor is His39. Asp136 (charge relay) is an active-site residue. The UDP-alpha-D-glucose site is built by Ser311, Gln374, Trp392, Asn393, Ser394, Glu397, Asp413, and Gln414.

The protein belongs to the UDP-glycosyltransferase family. Highly expressed in young fruits 15 and 34 days after anthesis (15-DAA and 34-DAA).

The enzyme catalyses mogrol + UDP-alpha-D-glucose = mogroside I-A1 + UDP + H(+). The catalysed reaction is mogroside I-A1 + UDP-alpha-D-glucose = mogroside IIE + UDP + H(+). It catalyses the reaction mogroside IE + UDP-alpha-D-glucose = mogroside IIE + UDP + H(+). It carries out the reaction mogroside II-A1 + UDP-alpha-D-glucose = mogroside IIIX + UDP + H(+). The enzyme catalyses mogroside II-A + UDP-alpha-D-glucose = mogroside III + UDP + H(+). The catalysed reaction is mogroside IIE + UDP-alpha-D-glucose = mogroside III-C3(1-&gt;6) + UDP + H(+). It catalyses the reaction mogroside III + UDP-alpha-D-glucose = isomogroside IV + UDP + H(+). It carries out the reaction mogroside III + UDP-alpha-D-glucose = mogroside IV + UDP + H(+). The enzyme catalyses mogroside IIIX + UDP-alpha-D-glucose = mogroside IVA + UDP + H(+). The catalysed reaction is siamenoside I + UDP-alpha-D-glucose = isomogroside V + UDP + H(+). It participates in secondary metabolite biosynthesis; terpenoid biosynthesis. Its function is as follows. UDP-glycosyltransferase involved in the biosynthesis of cucurbitacin and mogroside tetracyclic triterpene natural products (e.g. siamenoside I and mogrosides IV, V and VI). Cucurbitacins have cytotoxic properties and exhibit deterrent taste as a defense barrier against herbivores. Mogrosides are nonsugar highly oxygenated compounds used as high-intensity zero-calorie sweeteners; they also possess pharmacological properties such as regulating immunity, lowering blood sugar and lipid levels, protecting the liver, and acting as antioxidants and antitumor agents. Catalyzes the C24 primary glucosylation of mogrol and mogroside I-E1, and the C3 primary glucosylation of mogroside I-A1, mogroside II-A1 and mogroside II-A. Also supports branching glucosylations of mogroside II-E, mogroside III, mogroside IIIx and siamenoside I. The sequence is that of Mogroside I-A1 synthase from Siraitia grosvenorii (Monk's fruit).